A 223-amino-acid polypeptide reads, in one-letter code: TMF-regulated nuclear protein 1 (223 aa).

Disordered stretches follow at residues 1-84 (MPGC…GPAG) and 196-223 (GRLRRGQGPEPDSPFRRSPPRGPASPQR). Positions 21 to 54 (GSPPPPPREPLPSLQPPSPSPTSTPTPTKSPPLP) are enriched in pro residues. Positions 73 to 84 (ASGGSGGAGPAG) are enriched in gly residues.

As to quaternary structure, interacts with TMF1; may regulate TRNP1 proteasomal degradation. Ubiquitinated, leading to its degradation by the proteasome. As to expression, expressed in brain and kidney (at protein level). Also detected in spleen and intestine.

Its subcellular location is the nucleus. Its function is as follows. DNA-binding factor that regulates the expression of a subset of genes and plays a key role in tangential, radial, and lateral expansion of the brain neocortex. Regulates neural stem cells proliferation and the production of intermediate neural progenitors and basal radial glial cells affecting the process of cerebral cortex gyrification. May control the proliferation rate of cells by regulating their progression through key cell-cycle transition points. The chain is TMF-regulated nuclear protein 1 (Trnp1) from Mus musculus (Mouse).